Here is a 1309-residue protein sequence, read N- to C-terminus: DNA repair protein RAD9 (1309 aa).

The segment covering 1–19 (MSGQLVQWKSSPDRVTQSA) has biased composition (polar residues). Positions 1–39 (MSGQLVQWKSSPDRVTQSAIKEALHSPLADGDMNEMNVP) are disordered. 3 positions are modified to phosphoserine: serine 26, serine 56, and serine 205. Phosphothreonine is present on threonine 218. Phosphoserine is present on serine 248. A disordered region spans residues 280–299 (NIGAIEEKNPVKKKSENYSS). The segment covering 284 to 299 (IEEKNPVKKKSENYSS) has biased composition (basic and acidic residues). Residues serine 312 and serine 315 each carry the phosphoserine modification. The segment at 342 to 365 (NSAVSGTPSRNNAEEEMYSSESVN) is disordered. The segment covering 343–352 (SAVSGTPSRN) has biased composition (polar residues). Serine 462 is modified (phosphoserine). A phosphothreonine mark is found at threonine 471 and threonine 474. The tract at residues 490 to 512 (PETSSPSKNTMSKPSNSSPIPKE) is disordered. Polar residues predominate over residues 491 to 508 (ETSSPSKNTMSKPSNSSP). Residue serine 568 is modified to Phosphoserine. Disordered regions lie at residues 636–655 (KGNS…DKQD) and 691–731 (IIQN…NSDL). Positions 642-655 (LHDDNKECNSDKQD) are enriched in basic and acidic residues. Serine 729 carries the phosphoserine modification. Residues 994-1122 (RTGNVFDKCI…RIVPHLIYQY (129 aa)) enclose the BRCT domain.

Physically associates with RAD53.

It localises to the nucleus. Its function is as follows. Essential for cell cycle arrest at the G2 stage following DNA damage by X-irradiation or inactivation of DNA ligase. The polypeptide is DNA repair protein RAD9 (RAD9) (Saccharomyces cerevisiae (strain ATCC 204508 / S288c) (Baker's yeast)).